A 747-amino-acid chain; its full sequence is Eukaryotic translation initiation factor 3 subunit B (747 aa).

The region spanning 42–128 (AFVVVDGLPE…HTLRVNKLTD (87 aa)) is the RRM domain. WD repeat units follow at residues 195–234 (DRQH…RQRR), 236–292 (AHPF…PLRS), 310–349 (APKF…LLDK), 520–563 (LEKK…EKPE), and 578–623 (ADHY…LREE).

Belongs to the eIF-3 subunit B family. In terms of assembly, component of the eukaryotic translation initiation factor 3 (eIF-3) complex.

The protein resides in the cytoplasm. Its function is as follows. RNA-binding component of the eukaryotic translation initiation factor 3 (eIF-3) complex, which is involved in protein synthesis of a specialized repertoire of mRNAs and, together with other initiation factors, stimulates binding of mRNA and methionyl-tRNAi to the 40S ribosome. The eIF-3 complex specifically targets and initiates translation of a subset of mRNAs involved in cell proliferation. This is Eukaryotic translation initiation factor 3 subunit B (prt-1) from Neurospora crassa (strain ATCC 24698 / 74-OR23-1A / CBS 708.71 / DSM 1257 / FGSC 987).